The following is a 2184-amino-acid chain: Genome polyprotein (2184 aa).

Gly2 carries the N-myristoyl glycine; by host lipid modification. Residues 2–1494 (GAQVSTQKTG…HVSRAFICLQ (1493 aa)) lie on the Cytoplasmic side of the membrane. The tract at residues 567 to 583 (FYQGDVQNAVEGAMVRV) is amphipathic alpha-helix. Residues His871 and Asp889 each act as for protease 2A activity in the active site. Positions 906 and 908 each coordinate Zn(2+). The active-site For protease 2A activity is Cys960. 2 residues coordinate Zn(2+): Cys966 and His968. The segment at 1100–1172 (NNGWLKKFTE…EQSAPSQGDQ (73 aa)) is membrane-binding. The segment at 1100–1238 (NNGWLKKFTE…SPGAGKSVAT (139 aa)) is oligomerization. The RNA-binding stretch occupies residues 1121–1125 (AIKIQ). The region spanning 1204-1360 (EKKMSNYIQF…SMYSQNGKIN (157 aa)) is the SF3 helicase domain. 3 residues coordinate Zn(2+): Cys1368, Cys1380, and Cys1385. The segment at 1368–1385 (CDEDCCPVNFKKCCPLVC) adopts a C4-type; degenerate zinc-finger fold. An RNA-binding region spans residues 1412–1419 (EYNHRHSV). Residues 1423–1428 (LEALFQ) form an oligomerization region. An intramembrane segment occupies 1495–1510 (ALTTFVSVAGIIYIIY). Residues 1511–2184 (KLFAGFQGAY…TLRRKWLDSF (674 aa)) lie on the Cytoplasmic side of the membrane. The residue at position 1520 (Tyr1520) is an O-(5'-phospho-RNA)-tyrosine. Positions 1540–1718 (GPAFEFAVAM…FSAALLRHYF (179 aa)) constitute a Peptidase C3 domain. Residues His1579, Glu1610, and Cys1686 each act as for protease 3C activity in the active site. The RdRp catalytic domain maps to 1949-2065 (GHLIAFDYSG…SYPWPIDASL (117 aa)). Asp1955 and Asp2051 together coordinate Mg(2+).

This sequence belongs to the picornaviruses polyprotein family. As to quaternary structure, interacts with capsid protein VP1 and capsid protein VP3 to form heterotrimeric protomers. In terms of assembly, interacts with capsid protein VP0, and capsid protein VP3 to form heterotrimeric protomers. Five protomers subsequently associate to form pentamers which serve as building blocks for the capsid. Interacts with capsid protein VP2, capsid protein VP3 and capsid protein VP4 following cleavage of capsid protein VP0. Interacts with capsid protein VP1 and capsid protein VP3 in the mature capsid. As to quaternary structure, interacts with capsid protein VP0 and capsid protein VP1 to form heterotrimeric protomers. Five protomers subsequently associate to form pentamers which serve as building blocks for the capsid. Interacts with capsid protein VP4 in the mature capsid. Interacts with protein 2C; this interaction may be important for virion morphogenesis. In terms of assembly, interacts with capsid protein VP1 and capsid protein VP3. Homodimer. As to quaternary structure, homohexamer; forms a hexameric ring structure with 6-fold symmetry characteristic of AAA+ ATPases. Interacts (via N-terminus) with host RTN3 (via reticulon domain); this interaction is important for viral replication. Interacts with capsid protein VP3; this interaction may be important for virion morphogenesis. In terms of assembly, interacts with protein 3CD. Homodimer. Interacts with host GBF1. Interacts (via GOLD domain) with host ACBD3 (via GOLD domain); this interaction allows the formation of a viral protein 3A/ACBD3 heterotetramer with a 2:2 stoichiometry, which will stimulate the recruitment of host PI4KB in order to synthesize PI4P at the viral RNA replication sites. As to quaternary structure, interacts with RNA-directed RNA polymerase. In terms of assembly, interacts with protein 3AB and with RNA-directed RNA polymerase. Interacts with Viral protein genome-linked and with protein 3CD. The cofactor is Mg(2+). Post-translationally, specific enzymatic cleavages in vivo by the viral proteases yield processing intermediates and the mature proteins. In terms of processing, myristoylation is required for the formation of pentamers during virus assembly. Further assembly of 12 pentamers and a molecule of genomic RNA generates the provirion. During virion maturation, immature virions are rendered infectious following cleavage of VP0 into VP4 and VP2. This maturation seems to be an autocatalytic event triggered by the presence of RNA in the capsid and it is followed by a conformational change infectious virion. Post-translationally, myristoylation is required during RNA encapsidation and formation of the mature virus particle. In terms of processing, VPg is uridylylated by the polymerase into VPg-pUpU. This acts as a nucleotide-peptide primer for the genomic RNA replication.

It is found in the virion. The protein localises to the host cytoplasm. It localises to the host cytoplasmic vesicle membrane. Its subcellular location is the host nucleus. It catalyses the reaction a ribonucleoside 5'-triphosphate + H2O = a ribonucleoside 5'-diphosphate + phosphate + H(+). It carries out the reaction Selective cleavage of Tyr-|-Gly bond in the picornavirus polyprotein.. The enzyme catalyses RNA(n) + a ribonucleoside 5'-triphosphate = RNA(n+1) + diphosphate. The catalysed reaction is Selective cleavage of Gln-|-Gly bond in the poliovirus polyprotein. In other picornavirus reactions Glu may be substituted for Gln, and Ser or Thr for Gly.. Replication or transcription is subject to high level of random mutations by the nucleotide analog ribavirin. Forms an icosahedral capsid of pseudo T=3 symmetry with capsid proteins VP2 and VP3. The capsid is 300 Angstroms in diameter, composed of 60 copies of each capsid protein and enclosing the viral positive strand RNA genome. Capsid protein VP1 mainly forms the vertices of the capsid. Capsid protein VP1 interacts with host ITGA2/ITGB1 to provide virion attachment to target host cells. This attachment induces virion internalization predominantly through caveolin-mediated endocytosis. Tyrosine kinases are probably involved in the entry process. After binding to its receptor, the capsid undergoes conformational changes. Capsid protein VP1 N-terminus (that contains an amphipathic alpha-helix) and capsid protein VP4 are externalized. Together, they shape a pore in the host membrane through which viral genome is translocated to host cell cytoplasm. Its function is as follows. Forms an icosahedral capsid of pseudo T=3 symmetry with capsid proteins VP2 and VP3. The capsid is 300 Angstroms in diameter, composed of 60 copies of each capsid protein and enclosing the viral positive strand RNA genome. Functionally, lies on the inner surface of the capsid shell. After binding to the host receptor, the capsid undergoes conformational changes. Capsid protein VP4 is released, Capsid protein VP1 N-terminus is externalized, and together, they shape a pore in the host membrane through which the viral genome is translocated into the host cell cytoplasm. In terms of biological role, component of immature procapsids, which is cleaved into capsid proteins VP4 and VP2 after maturation. Allows the capsid to remain inactive before the maturation step. Cysteine protease that cleaves viral polyprotein and specific host proteins. It is responsible for the autocatalytic cleavage between the P1 and P2 regions, which is the first cleavage occurring in the polyprotein. Also cleaves the host translation initiation factor EIF4G1, in order to shut down the capped cellular mRNA translation. Inhibits the host nucleus-cytoplasm protein and RNA trafficking by cleaving host members of the nuclear pores. Counteracts stress granule formation probably by antagonizing its assembly or promoting its dissassembly. Its function is as follows. Plays an essential role in the virus replication cycle by acting as a viroporin. Creates a pore in the host endoplasmic reticulum and as a consequence releases Ca2+ in the cytoplasm of infected cell. In turn, high levels of cytoplasmic calcium may trigger membrane trafficking and transport of viral ER-associated proteins to viroplasms, sites of viral genome replication. Functionally, induces and associates with structural rearrangements of intracellular membranes. Displays RNA-binding, nucleotide binding and NTPase activities. May play a role in virion morphogenesis and viral RNA encapsidation by interacting with the capsid protein VP3. In terms of biological role, localizes the viral replication complex to the surface of membranous vesicles. Together with protein 3CD binds the Cis-Active RNA Element (CRE) which is involved in RNA synthesis initiation. Acts as a cofactor to stimulate the activity of 3D polymerase, maybe through a nucleid acid chaperone activity. Localizes the viral replication complex to the surface of membranous vesicles. It inhibits host cell endoplasmic reticulum-to-Golgi apparatus transport and causes the disassembly of the Golgi complex, possibly through GBF1 interaction. This would result in depletion of MHC, trail receptors and IFN receptors at the host cell surface. Plays an essential role in viral RNA replication by recruiting ACBD3 and PI4KB at the viral replication sites, thereby allowing the formation of the rearranged membranous structures where viral replication takes place. Its function is as follows. Acts as a primer for viral RNA replication and remains covalently bound to viral genomic RNA. VPg is uridylylated prior to priming replication into VPg-pUpU. The oriI viral genomic sequence may act as a template for this. The VPg-pUpU is then used as primer on the genomic RNA poly(A) by the RNA-dependent RNA polymerase to replicate the viral genome. During genome replication, the VPg-RNA linkage is removed by the host TDP2, thereby accelerating replication. During the late stage of the replication cycle, host TDP2 is excluded from sites of viral RNA synthesis and encapsidation, allowing for the generation of progeny virions. Functionally, involved in the viral replication complex and viral polypeptide maturation. It exhibits protease activity with a specificity and catalytic efficiency that is different from protease 3C. Protein 3CD lacks polymerase activity. Protein 3CD binds to the 5'UTR of the viral genome. In terms of biological role, replicates the viral genomic RNA on the surface of intracellular membranes. May form linear arrays of subunits that propagate along a strong head-to-tail interaction called interface-I. Covalently attaches UMP to a tyrosine of VPg, which is used to prime RNA synthesis. The positive stranded RNA genome is first replicated at virus induced membranous vesicles, creating a dsRNA genomic replication form. This dsRNA is then used as template to synthesize positive stranded RNA genomes. ss(+)RNA genomes are either translated, replicated or encapsidated. Major viral protease that mediates proteolytic processing of the polyprotein. Cleaves host EIF5B, contributing to host translation shutoff. Also cleaves host PABPC1, contributing to host translation shutoff. Cleaves host NLRP1, triggers host N-glycine-mediated degradation of the autoinhibitory NLRP1 N-terminal fragment. This chain is Genome polyprotein, found in Homo sapiens (Human).